Reading from the N-terminus, the 229-residue chain is 7-cyano-7-deazaguanine synthase (229 aa).

15-25 (LSGGLDSATVV) lines the ATP pocket. Positions 194, 204, 207, and 210 each coordinate Zn(2+).

It belongs to the QueC family. Zn(2+) is required as a cofactor.

It carries out the reaction 7-carboxy-7-deazaguanine + NH4(+) + ATP = 7-cyano-7-deazaguanine + ADP + phosphate + H2O + H(+). The protein operates within purine metabolism; 7-cyano-7-deazaguanine biosynthesis. Its function is as follows. Catalyzes the ATP-dependent conversion of 7-carboxy-7-deazaguanine (CDG) to 7-cyano-7-deazaguanine (preQ(0)). The protein is 7-cyano-7-deazaguanine synthase of Pseudomonas savastanoi pv. phaseolicola (strain 1448A / Race 6) (Pseudomonas syringae pv. phaseolicola (strain 1448A / Race 6)).